A 69-amino-acid chain; its full sequence is Ribosome modulation factor (69 aa).

It belongs to the ribosome modulation factor family.

The protein resides in the cytoplasm. During stationary phase, converts 70S ribosomes to an inactive dimeric form (100S ribosomes). This chain is Ribosome modulation factor, found in Hahella chejuensis (strain KCTC 2396).